The primary structure comprises 626 residues: Basic helix-loop-helix ARNT-like protein 1 (626 aa).

Residues 1 to 58 are disordered; the sequence is MADQRMDISSTISDFMSPGPTDLLSGSLSTSGVDCNRKRKGSATDYQESMDTDKDDPH. S17 carries the post-translational modification Phosphoserine; by GSK3-beta. Over residues 17–32 the composition is skewed to low complexity; it reads SPGPTDLLSGSLSTSG. Residue T21 is modified to Phosphothreonine; by GSK3-beta. Positions 36–41 match the Nuclear localization signal motif; that stretch reads NRKRKG. Residues 72 to 125 enclose the bHLH domain; it reads NAREAHSQIEKRRRDKMNSFIDELASLVPTCNAMSRKLDKLTVLRMAVQHMKTL. Position 78 is a phosphoserine (S78). S90 carries the post-translational modification Phosphoserine; by CK2. Residues 142–152 carry the Nuclear export signal 1 motif; it reads LSDDELKHLIL. Residues 143 to 215 enclose the PAS 1 domain; it reads SDDELKHLIL…EQLSSSDTAP (73 aa). A Glycyl lysine isopeptide (Lys-Gly) (interchain with G-Cter in SUMO2 and SUMO3) cross-link involves residue K252. K259 is covalently cross-linked (Glycyl lysine isopeptide (Lys-Gly) (interchain with G-Cter in SUMO); alternate). K259 is covalently cross-linked (Glycyl lysine isopeptide (Lys-Gly) (interchain with G-Cter in SUMO2); alternate). Residues 326–396 form the PAS 2 domain; sequence PQPVNGEIRV…ECHRQVLQTR (71 aa). The Nuclear export signal 2 motif lies at 361–369; that stretch reads LAYLPQELL. The 44-residue stretch at 401 to 444 folds into the PAC domain; the sequence is TNCYKFKIKDGSFITLRSRWFSFMNPWTKEVEYIVSTNTVVLAN. 2 disordered regions span residues 459 to 492 and 511 to 595; these read SPHS…RAGA and GSSP…SPSN. Residues 508–588 form an interaction with CIART region; it reads RIRGSSPSSC…IGIDMIDNDQ (81 aa). The segment covering 511–521 has biased composition (low complexity); sequence GSSPSSCGSSP. An N6-acetyllysine modification is found at K538.

In terms of assembly, component of the circadian clock oscillator which includes the CRY1/2 proteins, CLOCK or NPAS2, BMAL1 or BMAL2, CSNK1D and/or CSNK1E, TIMELESS and the PER1/2/3 proteins. Forms a heterodimer with CLOCK. The CLOCK-BMAL1 heterodimer is required for E-box-dependent transactivation, for CLOCK nuclear translocation and degradation, and, for phosphorylation of both CLOCK and BMAL1. Part of a nuclear complex which also includes RACK1 and PRKCA; RACK1 and PRKCA are recruited to the complex in a circadian manner. Interacts with NPAS2. Interacts with EZH2. Interacts with SUMO3. Interacts with SIRT1. Interacts with AHR. Interacts with ID1, ID2 and ID3. Interacts with DDX4. Interacts with OGT. Interacts with EED and SUZ12. Interacts with MTA1. Interacts with CIART. Interacts with HSP90. Interacts with KAT2B and EP300. Interacts with BHLHE40/DEC1 and BHLHE41/DEC2. Interacts with RELB and the interaction is enhanced in the presence of CLOCK. Interacts with PER1, PER2, CRY1 and CRY2 and this interaction requires a translocation to the nucleus. Interaction of the CLOCK-BMAL1 heterodimer with PER or CRY inhibits transcription activation. Interaction of the CLOCK-BMAL1 with CRY1 is independent of DNA but with PER2 is off DNA. The CLOCK-BMAL1 heterodimer interacts with GSK3B. Interacts with KDM5A. Interacts with KMT2A; in a circadian manner. Interacts with UBE3A. Interacts with PRKCG. Interacts with MAGEL2. Interacts with NCOA2. Interacts with THRAP3. The CLOCK-BMAL1 heterodimer interacts with PASD1. Interacts with PASD1. Interacts with USP9X. Interacts with PIWIL2 (via PIWI domain). Interacts with HDAC3. Interacts with HNF4A. In terms of processing, ubiquitinated, leading to its proteasomal degradation. Deubiquitinated by USP9X. Post-translationally, O-glycosylated; contains O-GlcNAc. O-glycosylation by OGT prevents protein degradation by inhibiting ubiquitination. It also stabilizes the CLOCK-BMAL1 heterodimer thereby increasing CLOCK-BMAL1-mediated transcription of genes in the negative loop of the circadian clock such as PER1/2/3 and CRY1/2. Acetylated on Lys-538 by CLOCK during the repression phase of the circadian cycle. Acetylation facilitates recruitment of CRY1 protein and initiates the repression phase of the circadian cycle. Acetylated at Lys-538 by KAT5 during the activation phase of the cycle, leading to recruitment of the positive transcription elongation factor b (P-TEFb) and BRD4, followed by productive elongation of circadian transcripts. Deacetylated by SIRT1, which may result in decreased protein stability. In terms of processing, phosphorylated upon dimerization with CLOCK. Phosphorylation enhances the transcriptional activity, alters the subcellular localization and decreases the stability of the CLOCK-BMAL1 heterodimer by promoting its degradation. Phosphorylation shows circadian variations in the liver with a peak between CT10 to CT14. Phosphorylation at Ser-90 by CK2 is essential for its nuclear localization, its interaction with CLOCK and controls CLOCK nuclear entry. Dephosphorylation at Ser-78 is important for dimerization with CLOCK and transcriptional activity. Post-translationally, sumoylated on Lys-259 upon dimerization with CLOCK. Predominantly conjugated to poly-SUMO2/3 rather than SUMO1 and the level of these conjugates undergo rhythmic variation, peaking at CT9-CT12. Sumoylation localizes it exclusively to the PML body and promotes its ubiquitination in the PML body, ubiquitin-dependent proteasomal degradation and the transcriptional activity of the CLOCK-BMAL1 heterodimer. Undergoes lysosome-mediated degradation in a time-dependent manner in the liver.

The protein resides in the nucleus. The protein localises to the cytoplasm. It localises to the PML body. Its function is as follows. Transcriptional activator which forms a core component of the circadian clock. The circadian clock, an internal time-keeping system, regulates various physiological processes through the generation of approximately 24 hour circadian rhythms in gene expression, which are translated into rhythms in metabolism and behavior. It is derived from the Latin roots 'circa' (about) and 'diem' (day) and acts as an important regulator of a wide array of physiological functions including metabolism, sleep, body temperature, blood pressure, endocrine, immune, cardiovascular, and renal function. Consists of two major components: the central clock, residing in the suprachiasmatic nucleus (SCN) of the brain, and the peripheral clocks that are present in nearly every tissue and organ system. Both the central and peripheral clocks can be reset by environmental cues, also known as Zeitgebers (German for 'timegivers'). The predominant Zeitgeber for the central clock is light, which is sensed by retina and signals directly to the SCN. The central clock entrains the peripheral clocks through neuronal and hormonal signals, body temperature and feeding-related cues, aligning all clocks with the external light/dark cycle. Circadian rhythms allow an organism to achieve temporal homeostasis with its environment at the molecular level by regulating gene expression to create a peak of protein expression once every 24 hours to control when a particular physiological process is most active with respect to the solar day. Transcription and translation of core clock components (CLOCK, NPAS2, BMAL1, BMAL2, PER1, PER2, PER3, CRY1 and CRY2) plays a critical role in rhythm generation, whereas delays imposed by post-translational modifications (PTMs) are important for determining the period (tau) of the rhythms (tau refers to the period of a rhythm and is the length, in time, of one complete cycle). A diurnal rhythm is synchronized with the day/night cycle, while the ultradian and infradian rhythms have a period shorter and longer than 24 hours, respectively. Disruptions in the circadian rhythms contribute to the pathology of cardiovascular diseases, cancer, metabolic syndromes and aging. A transcription/translation feedback loop (TTFL) forms the core of the molecular circadian clock mechanism. Transcription factors, CLOCK or NPAS2 and BMAL1 or BMAL2, form the positive limb of the feedback loop, act in the form of a heterodimer and activate the transcription of core clock genes and clock-controlled genes (involved in key metabolic processes), harboring E-box elements (5'-CACGTG-3') within their promoters. The core clock genes: PER1/2/3 and CRY1/2 which are transcriptional repressors form the negative limb of the feedback loop and interact with the CLOCK|NPAS2-BMAL1|BMAL2 heterodimer inhibiting its activity and thereby negatively regulating their own expression. This heterodimer also activates nuclear receptors NR1D1/2 and RORA/B/G, which form a second feedback loop and which activate and repress BMAL1 transcription, respectively. BMAL1 positively regulates myogenesis and negatively regulates adipogenesis via the transcriptional control of the genes of the canonical Wnt signaling pathway. Plays a role in normal pancreatic beta-cell function; regulates glucose-stimulated insulin secretion via the regulation of antioxidant genes NFE2L2/NRF2 and its targets SESN2, PRDX3, CCLC and CCLM. Negatively regulates the mTORC1 signaling pathway; regulates the expression of MTOR and DEPTOR. Controls diurnal oscillations of Ly6C inflammatory monocytes; rhythmic recruitment of the PRC2 complex imparts diurnal variation to chemokine expression that is necessary to sustain Ly6C monocyte rhythms. Regulates the expression of HSD3B2, STAR, PTGS2, CYP11A1, CYP19A1 and LHCGR in the ovary and also the genes involved in hair growth. Plays an important role in adult hippocampal neurogenesis by regulating the timely entry of neural stem/progenitor cells (NSPCs) into the cell cycle and the number of cell divisions that take place prior to cell-cycle exit. Regulates the circadian expression of CIART and KLF11. The CLOCK-BMAL1 heterodimer regulates the circadian expression of SERPINE1/PAI1, VWF, B3, CCRN4L/NOC, NAMPT, DBP, MYOD1, PPARGC1A, PPARGC1B, SIRT1, GYS2, F7, NGFR, GNRHR, BHLHE40/DEC1, ATF4, MTA1, KLF10 and also genes implicated in glucose and lipid metabolism. Promotes rhythmic chromatin opening, regulating the DNA accessibility of other transcription factors. May play a role in spermatogenesis; contributes to the chromatoid body assembly and physiology. The NPAS2-BMAL1 heterodimer positively regulates the expression of MAOA, F7 and LDHA and modulates the circadian rhythm of daytime contrast sensitivity by regulating the rhythmic expression of adenylate cyclase type 1 (ADCY1) in the retina. The preferred binding motif for the CLOCK-BMAL1 heterodimer is 5'-CACGTGA-3', which contains a flanking adenine nucleotide at the 3-prime end of the canonical 6-nucleotide E-box sequence. CLOCK specifically binds to the half-site 5'-CAC-3', while BMAL1 binds to the half-site 5'-GTGA-3'. The CLOCK-BMAL1 heterodimer also recognizes the non-canonical E-box motifs 5'-AACGTGA-3' and 5'-CATGTGA-3'. Essential for the rhythmic interaction of CLOCK with ASS1 and plays a critical role in positively regulating CLOCK-mediated acetylation of ASS1. Plays a role in protecting against lethal sepsis by limiting the expression of immune checkpoint protein CD274 in macrophages in a PKM2-dependent manner. Regulates the diurnal rhythms of skeletal muscle metabolism via transcriptional activation of genes promoting triglyceride synthesis (DGAT2) and metabolic efficiency (COQ10B). The sequence is that of Basic helix-loop-helix ARNT-like protein 1 from Rattus norvegicus (Rat).